The chain runs to 566 residues: Phenylalanine--tRNA ligase beta subunit (566 aa).

In terms of domain architecture, B5 spans 287 to 362 (YFQEEVEFDV…IGEGLASFYP (76 aa)). Mg(2+) is bound by residues aspartate 340, aspartate 346, glutamate 349, and aspartate 350.

This sequence belongs to the phenylalanyl-tRNA synthetase beta subunit family. Type 2 subfamily. Tetramer of two alpha and two beta subunits. Mg(2+) serves as cofactor.

It localises to the cytoplasm. It carries out the reaction tRNA(Phe) + L-phenylalanine + ATP = L-phenylalanyl-tRNA(Phe) + AMP + diphosphate + H(+). In Borrelia garinii subsp. bavariensis (strain ATCC BAA-2496 / DSM 23469 / PBi) (Borreliella bavariensis), this protein is Phenylalanine--tRNA ligase beta subunit.